The following is a 376-amino-acid chain: uncharacterized protein (376 aa).

This sequence belongs to the YCR102c/YLR460c/YNL134c family.

This is an uncharacterized protein from Saccharomyces cerevisiae (strain ATCC 204508 / S288c) (Baker's yeast).